The chain runs to 563 residues: Arginine--tRNA ligase (563 aa).

The short motif at 121–131 (PNIAKPFSIGH) is the 'HIGH' region element.

This sequence belongs to the class-I aminoacyl-tRNA synthetase family. As to quaternary structure, monomer.

It localises to the cytoplasm. It carries out the reaction tRNA(Arg) + L-arginine + ATP = L-arginyl-tRNA(Arg) + AMP + diphosphate. The polypeptide is Arginine--tRNA ligase (Streptococcus pyogenes serotype M4 (strain MGAS10750)).